The sequence spans 289 residues: Serine/threonine-protein phosphatase Pgam5, mitochondrial (289 aa).

The protein belongs to the phosphoglycerate mutase family. BPG-dependent PGAM subfamily. As to quaternary structure, interacts with Pk92B/ASK1.

The protein resides in the mitochondrion outer membrane. It carries out the reaction O-phospho-L-seryl-[protein] + H2O = L-seryl-[protein] + phosphate. The catalysed reaction is O-phospho-L-threonyl-[protein] + H2O = L-threonyl-[protein] + phosphate. In terms of biological role, displays phosphatase activity for serine/threonine residues, and dephosphorylates and activates Pk92B kinase. Has apparently no phosphoglycerate mutase activity. This is Serine/threonine-protein phosphatase Pgam5, mitochondrial from Drosophila grimshawi (Hawaiian fruit fly).